The following is a 219-amino-acid chain: Ribonuclease HII (219 aa).

The 190-residue stretch at 30-219 (RVIAGIDEAG…VREHVTCPSS (190 aa)) folds into the RNase H type-2 domain. The a divalent metal cation site is built by Asp36, Glu37, and Asp128.

It belongs to the RNase HII family. Requires Mn(2+) as cofactor. Mg(2+) is required as a cofactor.

Its subcellular location is the cytoplasm. It catalyses the reaction Endonucleolytic cleavage to 5'-phosphomonoester.. Its function is as follows. Endonuclease that specifically degrades the RNA of RNA-DNA hybrids. This chain is Ribonuclease HII, found in Pelobacter propionicus (strain DSM 2379 / NBRC 103807 / OttBd1).